The primary structure comprises 458 residues: Elongation factor 1-alpha (458 aa).

A N,N,N-trimethylglycine; by EFM7 modification is found at glycine 2. The residue at position 3 (lysine 3) is an N6,N6-dimethyllysine; by EFM7; alternate. Lysine 3 is modified (N6-methyllysine; by EFM7; alternate). Residues 5-240 (KSHINVVVIG…DAIEQPSRPT (236 aa)) form the tr-type G domain. Residues 14 to 21 (GHVDSGKS) are G1. The residue at position 18 (serine 18) is a Phosphoserine. GTP is bound by residues serine 21 and threonine 22. Position 30 is an N6-methyllysine; by EFM1 (lysine 30). Residues 70 to 74 (GITID) are G2. Threonine 72 bears the Phosphothreonine mark. N6,N6,N6-trimethyllysine; by EFM5 is present on lysine 79. Threonine 82 carries the post-translational modification Phosphothreonine. Residues 91-94 (DAPG) form a G3 region. The GTP site is built by asparagine 153, lysine 154, and aspartate 156. The segment at 153 to 156 (NKMD) is G4. Residue serine 163 is modified to Phosphoserine. GTP is bound by residues serine 192, glycine 193, and tryptophan 194. A G5 region spans residues 192 to 194 (SGW). Glycyl lysine isopeptide (Lys-Gly) (interchain with G-Cter in ubiquitin) cross-links involve residues lysine 224, lysine 242, and lysine 253. Phosphothreonine is present on threonine 259. Lysine 271 is covalently cross-linked (Glycyl lysine isopeptide (Lys-Gly) (interchain with G-Cter in ubiquitin)). Serine 289 carries the phosphoserine modification. Residue lysine 316 is modified to N6,N6-dimethyllysine; by EFM4; alternate. At lysine 316 the chain carries N6-methyllysine; by EFM4; alternate. Lysine 390 carries the N6-methyllysine; by EFM6 modification. A Glycyl lysine isopeptide (Lys-Gly) (interchain with G-Cter in ubiquitin) cross-link involves residue lysine 393. Serine 414 bears the Phosphoserine mark. The residue at position 430 (threonine 430) is a Phosphothreonine. Lysine 437 participates in a covalent cross-link: Glycyl lysine isopeptide (Lys-Gly) (interchain with G-Cter in ubiquitin). Lysine 458 carries the post-translational modification Lysine methyl ester.

Belongs to the TRAFAC class translation factor GTPase superfamily. Classic translation factor GTPase family. EF-Tu/EF-1A subfamily. As to quaternary structure, the eukaryotic elongation factor 1 complex (eEF1) is probably a heterohexamer. Two trimeric complexes, each composed of eEF1A (TEF1 or TEF2), eEF1Balpha (EFB1) and eEF1Bgamma (CAM1 or TEF4), are probably dimerized via the eF1Bgamma subunits. Interacts with eEF1Balpha; the interaction is direct. Interacts with GCN2 (via C-terminus); this interaction is direct, occurs in amino acid-repleted cells, may be stabilized in a ribosome-dependent manner, reduces GCN2-mediated eIF-2-alpha phosphorylation and is lost in amino acid-starved cells and by uncharged tRNAs. Interacts with CEX1. Interacts with elongation factor 3 (YEF3 or HEF3). Interacts with NAP1. Interacts with SRV2. Interacts with chaperone ZPR1; the interaction is required for its proper folding. Binds to actin and forms a ternary complex with BNI1 and profilin. Interacts with the proteasome, probably via RPT1. Associates with ribosomes. Post-translationally, S-thiolated in response to oxidative stress, probably inhibiting the protein and causing a reduction in protein synthesis. Glutaminylated at Glu-45. An L-glutamine is linked to Glu-45 via the alpha amino group. This glutaminylation is yeast-specific and not essential for the normal functions of eEF1A. However, eEF1A glutaminylation slightly reduced growth under antibiotic-induced translational stress conditions.

The protein resides in the cytoplasm. It is found in the cytoskeleton. The protein operates within protein biosynthesis; polypeptide chain elongation. Inhibited by narciclasine. Its function is as follows. GTP-binding component of the eukaryotic elongation factor 1 complex (eEF1). In its active GTP-bound form, binds to and delivers aminoacyl-tRNA to the A-site of ribosomes during protein biosynthesis. In the presence of a correct codon-anticodon match between the aminoacyl-tRNA and the A-site codon of the ribosome-bound mRNA, the ribosome acts as a GTPase activator and the GTP is hydrolyzed. The inactive GDP-bound form leaves the ribosome and must be recycled by its guanine nucleotide exchange factor (GEF) (eEF1B subcomplex) before binding another molecule of aminoacyl-tRNA. Required for nuclear export of aminoacyl-tRNAs. May also be involved in translational quality control by targeting cotranslationally damaged proteins to the proteasome. Also exhibits actin filament-binding and -bundling activities and is involved in cytoskeleton organization. Plays a role as a negative regulator of GCN2 kinase activity by inhibiting GCN2-mediated eIF-2-alpha phosphorylation in amino acid-repleted cells. The polypeptide is Elongation factor 1-alpha (TEF1) (Saccharomyces cerevisiae (strain ATCC 204508 / S288c) (Baker's yeast)).